Reading from the N-terminus, the 258-residue chain is Pyridoxine 5'-phosphate synthase (258 aa).

Asn6 lines the 3-amino-2-oxopropyl phosphate pocket. 8–9 serves as a coordination point for 1-deoxy-D-xylulose 5-phosphate; sequence DH. Arg17 contributes to the 3-amino-2-oxopropyl phosphate binding site. Catalysis depends on His42, which acts as the Proton acceptor. Positions 44 and 49 each coordinate 1-deoxy-D-xylulose 5-phosphate. The active-site Proton acceptor is the Glu69. A 1-deoxy-D-xylulose 5-phosphate-binding site is contributed by Thr99. The Proton donor role is filled by His213. 3-amino-2-oxopropyl phosphate contacts are provided by residues Gly214 and 235 to 236; that span reads GQ.

This sequence belongs to the PNP synthase family. In terms of assembly, homooctamer; tetramer of dimers.

The protein localises to the cytoplasm. The enzyme catalyses 3-amino-2-oxopropyl phosphate + 1-deoxy-D-xylulose 5-phosphate = pyridoxine 5'-phosphate + phosphate + 2 H2O + H(+). It functions in the pathway cofactor biosynthesis; pyridoxine 5'-phosphate biosynthesis; pyridoxine 5'-phosphate from D-erythrose 4-phosphate: step 5/5. In terms of biological role, catalyzes the complicated ring closure reaction between the two acyclic compounds 1-deoxy-D-xylulose-5-phosphate (DXP) and 3-amino-2-oxopropyl phosphate (1-amino-acetone-3-phosphate or AAP) to form pyridoxine 5'-phosphate (PNP) and inorganic phosphate. The chain is Pyridoxine 5'-phosphate synthase from Sulfurovum sp. (strain NBC37-1).